The chain runs to 1460 residues: Centrosomal protein of 164 kDa (1460 aa).

Positions 1–194 (MAGRPLRIGD…PSQGLKTSAY (194 aa)) are interaction with ATRIP. Positions 56–89 (APLPGEWKPCQDITGDIYYFNFANGQSMWDHPCD) constitute a WW domain. The tract at residues 107 to 135 (GAIKKKKKKKEKKDKKDRDPPKSSLALGS) is disordered. Residues 109 to 119 (IKKKKKKKEKK) show a composition bias toward basic residues. Serine 186 carries the post-translational modification Phosphoserine; by ATR and ATM. Serine 201 carries the phosphoserine modification. Disordered stretches follow at residues 213 to 412 (GLGE…HGLD), 440 to 593 (AQQP…AALK), and 658 to 719 (EEAR…QKNR). Residues 217–227 (ETNEEDEEESD) show a composition bias toward acidic residues. The segment covering 256 to 270 (ESLRTSQPEEKKDVS) has biased composition (basic and acidic residues). Residues 285–296 (SSPGADSSLSSA) show a composition bias toward low complexity. 2 stretches are compositionally biased toward basic and acidic residues: residues 310-323 (LPEK…EPKI) and 357-367 (EGSRREEAAKE). Low complexity predominate over residues 453–464 (QSSQDELQSKQS). Over residues 465 to 481 (KGLEERLSPPLPHEERA) the composition is skewed to basic and acidic residues. Low complexity predominate over residues 514-525 (SAASLSLQLSLQ). A compositionally biased stretch (basic and acidic residues) spans 537–546 (EKGKEQHSQA). Serine 566 is subject to Phosphoserine. Basic and acidic residues-rich tracts occupy residues 658–668 (EEARMREEESQ) and 686–719 (DQIR…QKNR). Residues 1154-1206 (GIKALEDMRKNLEKETRHLDEMKSAMRKGHNLLKKKEEKLNQLESSLWEEASD) adopt a coiled-coil conformation. The interval 1290 to 1310 (PPPLLASMPAQLPPRDPKSTP) is disordered. Phosphoserine occurs at positions 1386, 1388, and 1443.

As to quaternary structure, interacts (via N-terminus) with ATRIP. Interacts with ATM, ATR and MDC1. Interacts with XPA (via N-terminus) upon UV irradiation. Interacts with CEP83, CCDC92, TTBK2, DVL3, NPHP3 and weakly with NPHP4. Interacts with DZIP1. Post-translationally, phosphorylation at Ser-186 is induced upon DNA-damage caused by treatment with IR irradiation, UV irradiation, hydroxyurea or amphidicolin. Also MDC1-mediated chromatin remodeling is critical for DNA damage-induced phosphorylation. As to expression, expressed in several cell lines.

It is found in the cytoplasm. It localises to the cytoskeleton. The protein resides in the microtubule organizing center. Its subcellular location is the centrosome. The protein localises to the centriole. It is found in the nucleus. Its function is as follows. Plays a role in microtubule organization and/or maintenance for the formation of primary cilia (PC), a microtubule-based structure that protrudes from the surface of epithelial cells. Plays a critical role in G2/M checkpoint and nuclear divisions. A key player in the DNA damage-activated ATR/ATM signaling cascade since it is required for the proper phosphorylation of H2AX, RPA, CHEK2 and CHEK1. Plays a critical role in chromosome segregation, acting as a mediator required for the maintenance of genomic stability through modulation of MDC1, RPA and CHEK1. The chain is Centrosomal protein of 164 kDa (CEP164) from Homo sapiens (Human).